Consider the following 427-residue polypeptide: Methylenetetrahydrofolate--tRNA-(uracil-5-)-methyltransferase TrmFO (427 aa).

G6 to G11 provides a ligand contact to FAD.

It belongs to the MnmG family. TrmFO subfamily. FAD is required as a cofactor.

The protein localises to the cytoplasm. The enzyme catalyses uridine(54) in tRNA + (6R)-5,10-methylene-5,6,7,8-tetrahydrofolate + NADH + H(+) = 5-methyluridine(54) in tRNA + (6S)-5,6,7,8-tetrahydrofolate + NAD(+). The catalysed reaction is uridine(54) in tRNA + (6R)-5,10-methylene-5,6,7,8-tetrahydrofolate + NADPH + H(+) = 5-methyluridine(54) in tRNA + (6S)-5,6,7,8-tetrahydrofolate + NADP(+). Its function is as follows. Catalyzes the folate-dependent formation of 5-methyl-uridine at position 54 (M-5-U54) in all tRNAs. This Acholeplasma laidlawii (strain PG-8A) protein is Methylenetetrahydrofolate--tRNA-(uracil-5-)-methyltransferase TrmFO.